Consider the following 445-residue polypeptide: Trigger factor (445 aa).

The 86-residue stretch at 162–247 (GDQVTIDAIG…IKAVHTAEPT (86 aa)) folds into the PPIase FKBP-type domain.

This sequence belongs to the FKBP-type PPIase family. Tig subfamily.

It localises to the cytoplasm. The enzyme catalyses [protein]-peptidylproline (omega=180) = [protein]-peptidylproline (omega=0). Involved in protein export. Acts as a chaperone by maintaining the newly synthesized protein in an open conformation. Functions as a peptidyl-prolyl cis-trans isomerase. The sequence is that of Trigger factor from Rickettsia massiliae (strain Mtu5).